Reading from the N-terminus, the 595-residue chain is Elongation factor 4 (595 aa).

The tr-type G domain maps to 2-183 (KNIRNFCIIA…AIIERISPPT (182 aa)). GTP contacts are provided by residues 14-19 (DHGKST) and 130-133 (NKID).

This sequence belongs to the TRAFAC class translation factor GTPase superfamily. Classic translation factor GTPase family. LepA subfamily.

It localises to the cell inner membrane. It carries out the reaction GTP + H2O = GDP + phosphate + H(+). Its function is as follows. Required for accurate and efficient protein synthesis under certain stress conditions. May act as a fidelity factor of the translation reaction, by catalyzing a one-codon backward translocation of tRNAs on improperly translocated ribosomes. Back-translocation proceeds from a post-translocation (POST) complex to a pre-translocation (PRE) complex, thus giving elongation factor G a second chance to translocate the tRNAs correctly. Binds to ribosomes in a GTP-dependent manner. The polypeptide is Elongation factor 4 (Amoebophilus asiaticus (strain 5a2)).